Reading from the N-terminus, the 400-residue chain is Formate-dependent phosphoribosylglycinamide formyltransferase (400 aa).

N(1)-(5-phospho-beta-D-ribosyl)glycinamide contacts are provided by residues 22–23 (EL) and Glu-82. ATP is bound by residues Arg-115, Lys-157, 162-167 (SSGKGQ), 197-200 (EGFI), and Glu-205. Positions 120-315 (RLAAETLGVP…EFELHARAIL (196 aa)) constitute an ATP-grasp domain. Mg(2+) is bound by residues Glu-274 and Glu-286. Residues Asp-293, Lys-362, and 369-370 (RR) each bind N(1)-(5-phospho-beta-D-ribosyl)glycinamide.

The protein belongs to the PurK/PurT family. Homodimer.

It carries out the reaction N(1)-(5-phospho-beta-D-ribosyl)glycinamide + formate + ATP = N(2)-formyl-N(1)-(5-phospho-beta-D-ribosyl)glycinamide + ADP + phosphate + H(+). The protein operates within purine metabolism; IMP biosynthesis via de novo pathway; N(2)-formyl-N(1)-(5-phospho-D-ribosyl)glycinamide from N(1)-(5-phospho-D-ribosyl)glycinamide (formate route): step 1/1. Involved in the de novo purine biosynthesis. Catalyzes the transfer of formate to 5-phospho-ribosyl-glycinamide (GAR), producing 5-phospho-ribosyl-N-formylglycinamide (FGAR). Formate is provided by PurU via hydrolysis of 10-formyl-tetrahydrofolate. This is Formate-dependent phosphoribosylglycinamide formyltransferase from Variovorax paradoxus (strain S110).